The primary structure comprises 590 residues: Zinc finger protein 703 (590 aa).

Residues Met1–Glu14 are compositionally biased toward polar residues. Disordered regions lie at residues Met1–Arg43, Cys96–Val293, and Leu341–Ala366. Position 2 is an N-acetylserine (Ser2). Low complexity-rich tracts occupy residues Pro27–Pro37, Arg128–Ala139, Gly171–Lys189, and Ala207–Gly219. A compositionally biased stretch (basic and acidic residues) spans Glu241–Pro251. Ser252 is modified (phosphoserine). Composition is skewed to gly residues over residues Arg260–Glu273 and Leu341–Leu352. A C2H2-type zinc finger spans residues His456 to His484. Arg580 is subject to Omega-N-methylarginine.

The protein belongs to the Elbow/Noc family. Interacts with TLE4; increases transcriptional repression. Interacts with DCAF7 and PHB2. May interact with HSPD1. In terms of tissue distribution, expressed in mammary epithelium.

It localises to the nucleus. The protein localises to the cytoplasm. Transcriptional corepressor which does not bind directly to DNA and may regulate transcription through recruitment of histone deacetylases to gene promoters. Regulates cell adhesion, migration and proliferation. May be required for segmental gene expression during hindbrain development. The protein is Zinc finger protein 703 (ZNF703) of Homo sapiens (Human).